We begin with the raw amino-acid sequence, 527 residues long: Coiled-coil domain-containing protein 148 (527 aa).

Coiled-coil stretches lie at residues 289 to 353 and 401 to 438; these read LAKD…TEIK and LEKR…VAVQ.

This is Coiled-coil domain-containing protein 148 (Ccdc148) from Mus musculus (Mouse).